The chain runs to 453 residues: MDHAAAQLEKQHVHDVYESTAPYFSDLQSKAWPRVRQFLQEQKPGSLIADIGCGTGKYLKVNSQVHTLGCDYCAPLVEIARSRGCEVMVCDNLNLPFRDQGFDAIISIGVIHHFSTKQRRIRAIKEMARVLVPGGQLMIYVWAMEQKNRHFEKQDVLVPWNKALCSQRLSESGQPGRKQECGHPERGYPYHPACSACHCSVCFEGRCNSKRSHSVDCDSVLAGTCCANISKEGEEENGFYNTLGKSFRSWFSSRSLDESTLRKQIEKVRPLKSTESWANSAISIQPSRHSSFDLGHPETLSAGEQNLDEEVFVEPSQGPREWLRAPTTCKQLNGDHPGVIRRNGDGNFLGGANAKESCVDEGNLEEGTASGSKLWRRISAADSTDSNPGDAISVEEQQPDVLDSRAFMRYYHVFREGELCGLLKESVSELHILSSGNDHGNWCVIAEKRESCD.

A Phosphoserine modification is found at S214.

This sequence belongs to the methyltransferase superfamily.

In terms of biological role, may modify wobble uridines in specific arginine and glutamic acid tRNAs. Acts as a tumor suppressor by promoting the expression of LIN9. The polypeptide is Probable tRNA methyltransferase 9B (TRMT9B) (Bos taurus (Bovine)).